We begin with the raw amino-acid sequence, 402 residues long: Propionate kinase (402 aa).

2 residues coordinate ATP: N11 and K18. Residue N11 participates in Mg(2+) binding. Residue R86 participates in substrate binding. D143 functions as the Proton donor/acceptor in the catalytic mechanism. ATP is bound by residues H175, 203-207, 278-280, and 326-330; these read HLGNG, DLR, and GIGEN.

Belongs to the acetokinase family. TdcD subfamily. Homodimer. The cofactor is Mg(2+).

The catalysed reaction is propanoate + ATP = propanoyl phosphate + ADP. Its pathway is amino-acid degradation; L-threonine degradation via propanoate pathway; propanoate from L-threonine: step 4/4. Catalyzes the conversion of propionyl phosphate and ADP to propionate and ATP. This chain is Propionate kinase, found in Salmonella typhimurium (strain D23580).